Reading from the N-terminus, the 850-residue chain is MASKRKASAMATEPEEPVDPADELMFLNLGGGNEVGRSCHIIQYKGKTVMLDAGQHPAYDGLAALPFFDDFDLSTVDVLLISHFHIDHAASLPYVLAKTNFRGRVFMTHATKAIYKWLIQDSVRVGNTSSNPQSSLVYTEEDHLKTFPMIEAIDYNTTHTISSIRITPYPAGHVLGAAMFLIEIAGLKIFFTGDYSREEDRHLISAKVPKGVKIDVLITESTYGIASHIPRPEREQALMKSITGILNRGGRVLMPVFALGRAQELLLILDEYWGKHAEYQKYPIYYASNLARKCMLVYQTYVGSMNDNIKRLFRERLAESESSGDGAGKGGPWDFRFIRSLKSLDRFEDVGGCVMLASPGMLQNGVSRELLERWAPSEKNGVIITGYSVEGTMAKQLLQEPEQIQAVMSRNIAGARRGPGGDAEKVMIPRRCTVQEFSFAAHVDGVENREFIEEVAAPVVILVHGEVHNMMRLKSKLLSLNATKEHKVKVFSPRNCEELRIPFKTDKVAKVVGKLASIPPSLKEAKTGHDGPLPSSTEPQLITGVLVQNDFKMSLMAPEDLREYAGLTTTTIACKQRLKLSAAGIDLIKWGLEGTFGAVEELPEVKPKLEIVKSENGDTKMEEADEELPHGDDVVAAYLVMGCVTVRYRASGEVELEWEGNMLNDGIADAVMAVLLGIESSPAAVKRSATKNPHTHSPLPADKNPHSHLTPEDRFFRLCMFLEAQFGQDNVSPIVEPKLPPLSPTTKAITSPSEETAKSSDVKSDADADASMDVSEEDEDEQQLKARERAEVERLERMGIPKPGVRIKVDKMEAKVWLEDLEVECANKIFRERVRAVVERAVEVVAPLWG.

Zn(2+) is bound by residues histidine 83, histidine 85, aspartate 87, histidine 88, histidine 173, and aspartate 194. The active-site Proton donor is the histidine 442. Histidine 464 contributes to the Zn(2+) binding site. Disordered regions lie at residues 685–708 (VKRSATKNPHTHSPLPADKNPHSH) and 732–784 (SPIV…EQQL). The segment covering 744–754 (PTTKAITSPSE) has biased composition (polar residues). Basic and acidic residues predominate over residues 755–766 (ETAKSSDVKSDA). Acidic residues predominate over residues 767 to 781 (DADASMDVSEEDEDE).

This sequence belongs to the metallo-beta-lactamase superfamily. RNA-metabolizing metallo-beta-lactamase-like family. CPSF2/YSH1 subfamily.

The protein localises to the nucleus. In terms of biological role, component of the cleavage factor I (CF I) involved in pre-mRNA 3'-end processing. The protein is Endoribonuclease ysh-1 (ysh-1) of Neurospora crassa (strain ATCC 24698 / 74-OR23-1A / CBS 708.71 / DSM 1257 / FGSC 987).